Reading from the N-terminus, the 192-residue chain is Peptidyl-tRNA hydrolase (192 aa).

Tyrosine 17 provides a ligand contact to tRNA. Residue histidine 22 is the Proton acceptor of the active site. Phenylalanine 68, asparagine 70, and asparagine 116 together coordinate tRNA.

The protein belongs to the PTH family. As to quaternary structure, monomer.

Its subcellular location is the cytoplasm. The catalysed reaction is an N-acyl-L-alpha-aminoacyl-tRNA + H2O = an N-acyl-L-amino acid + a tRNA + H(+). Its function is as follows. Hydrolyzes ribosome-free peptidyl-tRNAs (with 1 or more amino acids incorporated), which drop off the ribosome during protein synthesis, or as a result of ribosome stalling. Functionally, catalyzes the release of premature peptidyl moieties from peptidyl-tRNA molecules trapped in stalled 50S ribosomal subunits, and thus maintains levels of free tRNAs and 50S ribosomes. The sequence is that of Peptidyl-tRNA hydrolase from Xylella fastidiosa (strain Temecula1 / ATCC 700964).